The sequence spans 109 residues: UPF0122 protein Cbei_1174 (109 aa).

The protein belongs to the UPF0122 family.

In terms of biological role, might take part in the signal recognition particle (SRP) pathway. This is inferred from the conservation of its genetic proximity to ftsY/ffh. May be a regulatory protein. This chain is UPF0122 protein Cbei_1174, found in Clostridium beijerinckii (strain ATCC 51743 / NCIMB 8052) (Clostridium acetobutylicum).